Reading from the N-terminus, the 337-residue chain is Autophagy protein 5 (337 aa).

A Glycyl lysine isopeptide (Lys-Gly) (interchain with G-Cter in ATG12) cross-link involves residue Lys-128. The interval 271–290 is disordered; sequence RAQTSGEERSIDDTEEADGS. A compositionally biased stretch (basic and acidic residues) spans 276–290; the sequence is GEERSIDDTEEADGS.

This sequence belongs to the ATG5 family. As to quaternary structure, conjugated to ATG12. Post-translationally, conjugated to ATG12; which is essential for autophagy. Conjugation with ATG12 involves ATG7 as an E1-like activating enzyme and ATG10 as an E2-like conjugating enzyme. As to expression, ubiquitous.

The protein resides in the cytoplasm. Its function is as follows. Required for autophagy. Conjugation to ATG12 is essential for plant nutrient recycling. Involved in a negative feedback loop that modulates NPR1-dependent salicylic acid (SA) signaling and limits senescence and immunity-related programmed cell death (PCD) in plants. Involved in complete proteolysis of chloroplast stroma proteins in senescent leaves. Involved in the degradation of damaged peroxisomes. The sequence is that of Autophagy protein 5 from Arabidopsis thaliana (Mouse-ear cress).